The primary structure comprises 158 residues: MHGLKQLLIFTDGSCLGNPGPGGYGVVMKYKAHVKELSGGFALTTNNRMELLAPIMALEALKEPCQIILTSDSQYMRQGITQWIHGWKKRGWLTAAKEPVKNVDLWQRLDAATSTHKIDWRWVKGHAGHIENERCDTLAREAAEAGPSEVDTGYQAKG.

One can recognise an RNase H type-1 domain in the interval 3-144 (GLKQLLIFTD…CDTLAREAAE (142 aa)). Mg(2+) contacts are provided by Asp12, Glu50, Asp72, and Asp136.

The protein belongs to the RNase H family. In terms of assembly, monomer. The cofactor is Mg(2+).

The protein localises to the cytoplasm. It catalyses the reaction Endonucleolytic cleavage to 5'-phosphomonoester.. Its function is as follows. Endonuclease that specifically degrades the RNA of RNA-DNA hybrids. The chain is Ribonuclease H from Shewanella loihica (strain ATCC BAA-1088 / PV-4).